We begin with the raw amino-acid sequence, 198 residues long: MFLYTENFDEQKEKAMEGLRKALEEDKVDHDIIPLLEKINALQNYFTTSSCSGRISVMEMPHFGDKVNSVWLGKWHREVRLEEVLEAVGKHRSGQLWFLVRSPILHVGARTLEDAVRLLNLAIGLGFKYSNIKSVSHKKLVVEIRSTERMDVPLGENGELWVDEAYIEKIVNLANAQVRRFKGKLKRLEEEIEKLQED.

It belongs to the TYW3 family.

It catalyses the reaction 4-demethyl-7-[(3S)-3-amino-3-carboxypropyl]wyosine(37) in tRNA(Phe) + S-adenosyl-L-methionine = 7-[(3S)-3-amino-3-carboxypropyl]wyosine(37) in tRNA(Phe) + S-adenosyl-L-homocysteine + H(+). Functionally, S-adenosyl-L-methionine-dependent methyltransferase that acts as a component of the wyosine derivatives biosynthesis pathway. Probably methylates N-4 position of wybutosine-86 to produce wybutosine-72. This is tRNA(Phe) 7-((3-amino-3-carboxypropyl)-4-demethylwyosine(37)-N(4))-methyltransferase 1 from Thermococcus kodakarensis (strain ATCC BAA-918 / JCM 12380 / KOD1) (Pyrococcus kodakaraensis (strain KOD1)).